A 530-amino-acid chain; its full sequence is Hyalin (530 aa).

7 consecutive HYR domains span residues asparagine 1–alanine 66, threonine 67–glutamate 150, valine 151–glutamate 234, valine 235–glutamate 319, valine 320–glutamate 403, glutamate 404–threonine 486, and valine 487–valine 530.

As to quaternary structure, homooligomer in presence of calcium. In terms of processing, glycosylated.

Its subcellular location is the secreted. It is found in the extracellular space. The protein resides in the extracellular matrix. In terms of biological role, major constituent of the hyaline layer. The hyaline layer of echinoderm embryos is an extraembryonic matrix that functions as a substrate for cell adhesion through early development. The chain is Hyalin from Lytechinus variegatus (Green sea urchin).